The chain runs to 795 residues: Phospholipase A-2-activating protein (795 aa).

WD repeat units lie at residues 17 to 56, 63 to 107, 110 to 148, 149 to 188, 190 to 227, 229 to 268, and 270 to 307; these read HELD…RGFT, GHSN…PLYI, GHKD…MTLQ, GHTA…RTFS, HEDC…LGVY, GHTN…QTIR, and PAQS…TASA. S50 is modified (phosphoserine). A PFU domain is found at 366–465; the sequence is QWSVSDGRWI…KGQTLGLGNT (100 aa). K529 carries the N6-acetyllysine modification. In terms of domain architecture, PUL spans 533–794; sequence IYFPKKEALT…SECCRLILNL (262 aa). ARM repeat units lie at residues 546-588, 589-620, 621-669, 670-715, 716-755, and 756-795; these read ANPT…GNAS, EKPT…LRLS, IKHP…CFVS, QAGQ…CFHK, DHNI…LISD, and DSNA…LNLL.

The protein belongs to the WD repeat PLAP family. As to quaternary structure, interacts with ubiquitin. Interacts with UBXN6, VCP and YOD1; may form a complex involved in macroautophagy.

The protein localises to the nucleus. Its subcellular location is the cytoplasm. The protein resides in the synapse. Functionally, plays a role in protein ubiquitination, sorting and degradation through its association with VCP. Involved in ubiquitin-mediated membrane proteins trafficking to late endosomes in an ESCRT-dependent manner, and hence plays a role in synaptic vesicle recycling. May play a role in macroautophagy, regulating for instance the clearance of damaged lysosomes. Plays a role in cerebellar Purkinje cell development. Positively regulates cytosolic and calcium-independent phospholipase A2 activities in a tumor necrosis factor alpha (TNF-alpha)- or lipopolysaccharide (LPS)-dependent manner, and hence prostaglandin E2 biosynthesis. This chain is Phospholipase A-2-activating protein (Plaa), found in Rattus norvegicus (Rat).